Here is a 200-residue protein sequence, read N- to C-terminus: Holliday junction branch migration complex subunit RuvA (200 aa).

The interval 1–63 (MIASVRGEVL…EDSMTLYGFP (63 aa)) is domain I. The tract at residues 64–142 (DSESKELFGL…AVGSTSGAVP (79 aa)) is domain II. The interval 142 to 146 (PLGAG) is flexible linker. Positions 147-200 (GGGSVRDQIVEALVGLGFPAKQAEQATDSVLAEAPESTTSSALRSALSLLGKTR) are domain III.

It belongs to the RuvA family. In terms of assembly, homotetramer. Forms an RuvA(8)-RuvB(12)-Holliday junction (HJ) complex. HJ DNA is sandwiched between 2 RuvA tetramers; dsDNA enters through RuvA and exits via RuvB. An RuvB hexamer assembles on each DNA strand where it exits the tetramer. Each RuvB hexamer is contacted by two RuvA subunits (via domain III) on 2 adjacent RuvB subunits; this complex drives branch migration. In the full resolvosome a probable DNA-RuvA(4)-RuvB(12)-RuvC(2) complex forms which resolves the HJ.

The protein resides in the cytoplasm. Its function is as follows. The RuvA-RuvB-RuvC complex processes Holliday junction (HJ) DNA during genetic recombination and DNA repair, while the RuvA-RuvB complex plays an important role in the rescue of blocked DNA replication forks via replication fork reversal (RFR). RuvA specifically binds to HJ cruciform DNA, conferring on it an open structure. The RuvB hexamer acts as an ATP-dependent pump, pulling dsDNA into and through the RuvAB complex. HJ branch migration allows RuvC to scan DNA until it finds its consensus sequence, where it cleaves and resolves the cruciform DNA. This Rhodococcus opacus (strain B4) protein is Holliday junction branch migration complex subunit RuvA.